We begin with the raw amino-acid sequence, 100 residues long: MATVTDPRDIILAPVISEKSYSLLDDNVYTFVVHPDSNKTQIKIAIEKIFSVKVASVNTANRQGKRKRTRTGFGKRKSTKRAIVTLAPGSKPIDLFGAPA.

Belongs to the universal ribosomal protein uL23 family. Part of the 50S ribosomal subunit. Contacts protein L29, and trigger factor when it is bound to the ribosome.

In terms of biological role, one of the early assembly proteins it binds 23S rRNA. One of the proteins that surrounds the polypeptide exit tunnel on the outside of the ribosome. Forms the main docking site for trigger factor binding to the ribosome. The chain is Large ribosomal subunit protein uL23 from Mycolicibacterium paratuberculosis (strain ATCC BAA-968 / K-10) (Mycobacterium paratuberculosis).